We begin with the raw amino-acid sequence, 1020 residues long: Mediator of RNA polymerase II transcription subunit 16 (1020 aa).

The protein belongs to the Mediator complex subunit 16 family. As to quaternary structure, component of the Mediator complex.

The protein localises to the nucleus. Component of the Mediator complex, a coactivator involved in the regulated transcription of nearly all RNA polymerase II-dependent genes. Mediator functions as a bridge to convey information from gene-specific regulatory proteins to the basal RNA polymerase II transcription machinery. Mediator is recruited to promoters by direct interactions with regulatory proteins and serves as a scaffold for the assembly of a functional preinitiation complex with RNA polymerase II and the general transcription factors. This Scheffersomyces stipitis (strain ATCC 58785 / CBS 6054 / NBRC 10063 / NRRL Y-11545) (Yeast) protein is Mediator of RNA polymerase II transcription subunit 16 (SIN4).